Reading from the N-terminus, the 1183-residue chain is SR-related and CTD-associated factor 4 (1183 aa).

Positions 1–139 (MDAVNAFNQE…PLLDMAAGTS (139 aa)) constitute a CID domain. N6-acetyllysine is present on Lys-49. Position 154 is a phosphoserine (Ser-154). Disordered regions lie at residues 299 to 324 (VPVPSATSPPPPQTPFGYPGDGVQQP) and 348 to 561 (HHQV…QIKS). The segment covering 367–380 (APPPFPPMPQPGMP) has biased composition (pro residues). Low complexity predominate over residues 381 to 398 (QPGMAQPGLAQPGMAQPT). Pro residues predominate over residues 399–410 (MPQPGMPQPGMP). Positions 411 to 428 (QPGMAQPGLAQPGMAQPG) are enriched in low complexity. Over residues 429 to 440 (MPQPAMPQPAMP) the composition is skewed to pro residues. Residues 457–469 (PTFQSTFQPQNEP) are compositionally biased toward polar residues. Residues 488-498 (EVKRHVPESRK) show a composition bias toward basic and acidic residues. Over residues 499–536 (SRSRSPKRRRSRSGSRSRRSRHRRSRSRSRDRRRHSPR) the composition is skewed to basic residues. The span at 538–553 (RSQERRDREKERERRQ) shows a compositional bias: basic and acidic residues. Residues 569-643 (TTLWVGQLDK…KSIKIAWALN (75 aa)) enclose the RRM domain. Disordered regions lie at residues 691 to 722 (WKGIPKKPDNEVAQNGGAETSHTEPVSPIPKP), 800 to 858 (LPPG…SLPT), and 920 to 1183 (MPPH…EPPR). Phosphoserine is present on Ser-717. Pro residues-rich tracts occupy residues 800–823 (LPPGPPPPITPPVSIPPPHTPPIS) and 920–952 (MPPHMMHRGPPPGPGGFAMPPPHGMKGPFPPHG). The span at 1006-1020 (SPSQQPAPAQQQPPQ) shows a compositional bias: low complexity. At Ser-1042 the chain carries Phosphoserine. Positions 1047 to 1122 (VENDRERYGS…NRKEKHEVAD (76 aa)) are enriched in basic and acidic residues. Polar residues predominate over residues 1136–1145 (QVGTIDTVSE).

Interacts with POLR2A; via C-terminal heptapeptide repeat domain (CTD) phosphorylated at 'Ser-2' and 'Ser-5'.

Its subcellular location is the nucleus. Anti-terminator protein required to prevent early mRNA termination during transcription. Together with SCAF8, acts by suppressing the use of early, alternative poly(A) sites, thereby preventing the accumulation of non-functional truncated proteins. Mechanistically, associates with the phosphorylated C-terminal heptapeptide repeat domain (CTD) of the largest RNA polymerase II subunit (POLR2A), and subsequently binds nascent RNA upstream of early polyadenylation sites to prevent premature mRNA transcript cleavage and polyadenylation. Independently of SCAF8, also acts as a suppressor of transcriptional readthrough. This is SR-related and CTD-associated factor 4 from Mus musculus (Mouse).